A 396-amino-acid polypeptide reads, in one-letter code: S-arrestin (396 aa).

Belongs to the arrestin family.

Arrestin is one of the major proteins of the ros (retinal rod outer segments); it binds to photoactivated-phosphorylated rhodopsin, thereby apparently preventing the transducin-mediated activation of phosphodiesterase. This chain is S-arrestin, found in Lithobates pipiens (Northern leopard frog).